The chain runs to 400 residues: MRYDVLARAGFARRGNLHLPHSIVETPVFMPVGTQGTMKGIVPEQLVSMDCRILLCNTYHLGHRPGHERVKAAGGLHKMMNWNRSILTDSGGFQMVSLSKLMTVDENGVNFESPHTGEMMALPPEKSIEIQQALGADIMMQLDHVIHVLTTGDIVKEAMHRSIRWLDRCKVAHTRDDQAMFPILQGGLNLELRKECAKEMAKRAKVGIAIGGLSGGEEKDHFWRVVAACCAALPPHLPRYVMGVGFPVDLVICSFLGADMFDCVYPTRTARFGTAMVRRGGLMQLNQKRYKEDFLPIDKKCECNTCKNYTRAYIHSIVGKETVGCHLVSVHNIKHQLDLMRDVRQAIQSNSVEQFLKQFLYDYYGPIQSENPSKQDSEKMREVPQWVRDAVDHMGYKLDF.

The active-site Proton acceptor is aspartate 89. Residues 89 to 93, aspartate 143, glutamine 185, and glycine 212 each bind substrate; that span reads DSGGF. The RNA binding stretch occupies residues 243–249; it reads GVGFPVD. The Nucleophile role is filled by aspartate 262. The tract at residues 267–271 is RNA binding; important for wobble base 34 recognition; sequence TRTAR. Zn(2+) contacts are provided by cysteine 301, cysteine 303, cysteine 306, and histidine 331.

This sequence belongs to the queuine tRNA-ribosyltransferase family. As to quaternary structure, heterodimer of a catalytic subunit and an accessory subunit. Requires Zn(2+) as cofactor.

The protein resides in the cytoplasm. The enzyme catalyses guanosine(34) in tRNA + queuine = queuosine(34) in tRNA + guanine. Functionally, catalytic subunit of the queuine tRNA-ribosyltransferase (TGT) that catalyzes the base-exchange of a guanine (G) residue with queuine (Q) at position 34 (anticodon wobble position) in tRNAs with GU(N) anticodons (tRNA-Asp, -Asn, -His and -Tyr), resulting in the hypermodified nucleoside queuosine (7-(((4,5-cis-dihydroxy-2-cyclopenten-1-yl)amino)methyl)-7-deazaguanosine). Catalysis occurs through a double-displacement mechanism. The nucleophile active site attacks the C1' of nucleotide 34 to detach the guanine base from the RNA, forming a covalent enzyme-RNA intermediate. The proton acceptor active site deprotonates the incoming queuine, allowing a nucleophilic attack on the C1' of the ribose to form the product. The chain is Queuine tRNA-ribosyltransferase catalytic subunit from Caenorhabditis elegans.